A 244-amino-acid polypeptide reads, in one-letter code: Probable ABC transporter ATP-binding protein p29 (244 aa).

The 236-residue stretch at 6–241 (LVFDQVSLRY…KLTKQKLMQI (236 aa)) folds into the ABC transporter domain. 38-45 (GKSGVGKT) contacts ATP.

The protein belongs to the ABC transporter superfamily.

Its function is as follows. Part of a high-affinity transport system. This Mycoplasma pneumoniae (strain ATCC 29342 / M129 / Subtype 1) (Mycoplasmoides pneumoniae) protein is Probable ABC transporter ATP-binding protein p29 (p29).